The following is a 245-amino-acid chain: MKKLVAVTSMILTTFSVQAADLYLYAGAGLKEPVEKIIHQYEQETGNKVTVEYGGSGQILARYNTVKSGDLFLAGSEDYVTKLQKTNDVNNIGTIVLHVPVMAIRKDKISGIDSFKALAESSLRLGIGDSKAMALGKGAEKMFELSGYQKQLNDKIVVKAATVKQLMLYLLNGDVDAAVVGRSGAWKVRDKVELLPSPKGTPEEKVTIGLLFSSKYPKEAQQLFDFFKSPQGVKYFTDEGFLPAK.

Positions methionine 1–alanine 19 are cleaved as a signal peptide. Residues serine 56 and valine 163 each contribute to the molybdate site.

It belongs to the bacterial solute-binding protein ModA family.

It localises to the periplasm. Its function is as follows. Probably involved in the binding-dependent system. This chain is Putative binding protein HI_1525, found in Haemophilus influenzae (strain ATCC 51907 / DSM 11121 / KW20 / Rd).